Here is a 90-residue protein sequence, read N- to C-terminus: Small ribosomal subunit protein uS17m (90 aa).

It belongs to the universal ribosomal protein uS17 family. As to quaternary structure, component of the mitochondrial small ribosomal subunit (mt-SSU). Mature yeast 74S mitochondrial ribosomes consist of a small (37S) and a large (54S) subunit. The 37S small subunit contains a 15S ribosomal RNA (15S mt-rRNA) and at least 32 different proteins. The 54S large subunit contains a 21S rRNA (21S mt-rRNA) and at least 45 different proteins.

It is found in the mitochondrion. Functionally, component of the mitochondrial ribosome (mitoribosome), a dedicated translation machinery responsible for the synthesis of mitochondrial genome-encoded proteins, including at least some of the essential transmembrane subunits of the mitochondrial respiratory chain. The mitoribosomes are attached to the mitochondrial inner membrane and translation products are cotranslationally integrated into the membrane. uS17m may have a meiosis-specific role as it accumulates during the middle stage of sporulation. The protein is Small ribosomal subunit protein uS17m of Schizosaccharomyces pombe (strain 972 / ATCC 24843) (Fission yeast).